The following is a 737-amino-acid chain: Polyribonucleotide nucleotidyltransferase (737 aa).

Residues D489 and D495 each contribute to the Mg(2+) site. The KH domain maps to 556–615 (PKIDTIKIDVDKIKIVIGKGGETIDKIIAETGVKIDIDEEGNVSIYSSDQDAINRAKEII). The 69-residue stretch at 625–693 (DEVYRAKVVR…EKGRVDASMK (69 aa)) folds into the S1 motif domain. Residues 691–737 (SMKALLPRPPKPERDEKGEKSERPYRPRHHKDHKPKKEITETPKDSE) form a disordered region. Composition is skewed to basic and acidic residues over residues 700-715 (PKPE…ERPY) and 725-737 (PKKE…KDSE).

Belongs to the polyribonucleotide nucleotidyltransferase family. The cofactor is Mg(2+).

The protein resides in the cytoplasm. It catalyses the reaction RNA(n+1) + phosphate = RNA(n) + a ribonucleoside 5'-diphosphate. In terms of biological role, involved in mRNA degradation. Catalyzes the phosphorolysis of single-stranded polyribonucleotides processively in the 3'- to 5'-direction. This is Polyribonucleotide nucleotidyltransferase from Streptococcus pneumoniae (strain Hungary19A-6).